The primary structure comprises 424 residues: Adenylosuccinate synthetase (424 aa).

GTP is bound by residues 12 to 18 and 40 to 42; these read GDEGKGK and GHT. Asp-13 acts as the Proton acceptor in catalysis. Residues Asp-13 and Gly-40 each coordinate Mg(2+). IMP is bound by residues 13-16, 38-41, Thr-128, Arg-142, Gln-223, Thr-238, and Arg-302; these read DEGK and NAGH. His-41 (proton donor) is an active-site residue. 298 to 304 lines the substrate pocket; it reads TTTGRPR. Residues Arg-304, 330–332, and 412–414 each bind GTP; these read HVD and GVG.

Belongs to the adenylosuccinate synthetase family. Homodimer. It depends on Mg(2+) as a cofactor.

Its subcellular location is the cytoplasm. The enzyme catalyses IMP + L-aspartate + GTP = N(6)-(1,2-dicarboxyethyl)-AMP + GDP + phosphate + 2 H(+). Its pathway is purine metabolism; AMP biosynthesis via de novo pathway; AMP from IMP: step 1/2. Plays an important role in the de novo pathway of purine nucleotide biosynthesis. Catalyzes the first committed step in the biosynthesis of AMP from IMP. The polypeptide is Adenylosuccinate synthetase (Acetivibrio thermocellus (strain ATCC 27405 / DSM 1237 / JCM 9322 / NBRC 103400 / NCIMB 10682 / NRRL B-4536 / VPI 7372) (Clostridium thermocellum)).